Consider the following 276-residue polypeptide: Rhamnulose-1-phosphate aldolase (276 aa).

Glutamate 117 is a catalytic residue. Zn(2+) is bound by residues histidine 141, histidine 143, and histidine 212.

Belongs to the aldolase class II family. RhaD subfamily. Homotetramer. It depends on Zn(2+) as a cofactor.

It localises to the cytoplasm. The enzyme catalyses L-rhamnulose 1-phosphate = (S)-lactaldehyde + dihydroxyacetone phosphate. The protein operates within carbohydrate degradation; L-rhamnose degradation; glycerone phosphate from L-rhamnose: step 3/3. Functionally, catalyzes the reversible cleavage of L-rhamnulose-1-phosphate to dihydroxyacetone phosphate (DHAP) and L-lactaldehyde. The chain is Rhamnulose-1-phosphate aldolase from Klebsiella pneumoniae subsp. pneumoniae (strain ATCC 700721 / MGH 78578).